Here is a 190-residue protein sequence, read N- to C-terminus: Adenylate kinase (190 aa).

An ATP-binding site is contributed by 12–17; it reads GSGKTT. The interval 33–62 is NMP; sequence STGDLLRAEVASGSELGKTIDSFISKGNLV. Residues Thr34, Arg39, 60–62, 87–90, and Gln94 each bind AMP; these read NLV and GYPR. Positions 129-135 are LID; the sequence is GRARGAD. Arg130 is a binding site for ATP. AMP-binding residues include Arg132 and Arg144. Position 172 (Arg172) interacts with ATP.

This sequence belongs to the adenylate kinase family. In terms of assembly, monomer.

The protein localises to the cytoplasm. It carries out the reaction AMP + ATP = 2 ADP. Its pathway is purine metabolism; AMP biosynthesis via salvage pathway; AMP from ADP: step 1/1. Catalyzes the reversible transfer of the terminal phosphate group between ATP and AMP. Plays an important role in cellular energy homeostasis and in adenine nucleotide metabolism. This Campylobacter lari (strain RM2100 / D67 / ATCC BAA-1060) protein is Adenylate kinase.